We begin with the raw amino-acid sequence, 485 residues long: Neuropeptide F receptor (485 aa).

Over 1 to 91 (MIISMNQTEP…DSPWYHMLIS (91 aa)) the chain is Extracellular. The chain crosses the membrane as a helical span at residues 92-112 (MYGVLIVFGALGNTLVVIAVI). Over 113-122 (RKPIMRTARN) the chain is Cytoplasmic. The chain crosses the membrane as a helical span at residues 123–143 (LFILNLAISDLLLCLVTMPLT). At 144-163 (LMEILSKYWPYGSCSILCKT) the chain is on the extracellular side. An intrachain disulfide couples Cys-161 to Cys-248. A helical transmembrane segment spans residues 164–184 (IAMLQALCIFVSTISITAIAF). Residues 185 to 202 (DRYQVIVYPTRDSLQFVG) lie on the Cytoplasmic side of the membrane. A helical membrane pass occupies residues 203–223 (AVTILAGIWALALLLASPLFV). The Extracellular portion of the chain corresponds to 224-262 (YKELINTDTPALLQQIGLQDTIPYCIEDWPSRNGRFYYS). Residues 263 to 283 (IFSLCVQYLVPILIVSVAYFG) form a helical membrane-spanning segment. Over 284-317 (IYNKLKSRITVVAVQASSAQRKVERGRRMKRTNC) the chain is Cytoplasmic. A helical transmembrane segment spans residues 318-338 (LLISIAIIFGVSWLPLNFFNL). The Extracellular segment spans residues 339 to 355 (YADMERSPVTQSMLVRY). A helical transmembrane segment spans residues 356 to 376 (AICHMIGMSSACSNPLLYGWL). At 377–485 (NDNFRKEFQE…PSEVTKLMPR (109 aa)) the chain is on the cytoplasmic side.

This sequence belongs to the G-protein coupled receptor 1 family. In terms of tissue distribution, expressed in midgut, brain lobes and ventral nerve cord of larvae. In adults, expressed in a pair of dorsolateral neurons in the protocerebrum, and the central complex and a small number of neurons in the subesophageal ganglion (at protein level). Expressed in a subset of sugar-responsive PAIN neurons in the thoracic body but is absent from other peripheral PAIN neurons.

It is found in the membrane. Functionally, receptor for NPF. Integral part of the sensory system that mediates food signaling, providing the neural basis for the regulation of food response; coordinates larval foraging and social behavior changes during development. Required in dopaminergic (DA) neurons that innervate the mushroom body for satiety to suppress appetitive memory performance; a key factor in the internal state of hunger in the brain. NPF neurons coordinately modulate diverse sensory and motor neurons important for feeding, flight, and locomotion. NPF/NPFR pathway exerts its suppressive effect on larval aversion to diverse stressful stimuli (chemical stress and noxious heat) through attenuation of TRP channel-induced neuronal excitation. NPF neural signaling system plays a physiological role in acute modulation of alcohol sensitivity in adults, rather than a general response to intoxication by sedative agents. Activation and inhibition of the NPF system reduces and enhances ethanol preference, respectively. Sexual experience, the NPF system activity and ethanol consumption are all linked; sexual deprivation is a major contributor to enhanced ethanol preference. This is Neuropeptide F receptor from Drosophila melanogaster (Fruit fly).